Consider the following 269-residue polypeptide: RBPJ-interacting and tubulin-associated protein 1 (269 aa).

Residues 5–17 (VELAVSGIQTLPL) carry the Nuclear export signal motif. 2 disordered regions span residues 37 to 101 (SLFG…NKYR) and 141 to 269 (FWTP…PPWK). Residues 62–77 (RTSGVGTGTSRASGAN) are compositionally biased toward polar residues. A compositionally biased stretch (low complexity) spans 79-93 (SCETTSSSGSTPTLT). Residues 92–108 (LTPRKKNKYRLISHTPS) carry the Nuclear localization signal motif. Residues 128 to 156 (WMAKGDAAKLHSLFWTPPATPRGSHSPRP) form an interaction with RBPJ/RBPSUH region. Positions 156–269 (PRETPLRAIH…ATQKPKPPWK (114 aa)) are interaction with tubulin.

Belongs to the RITA family. Interacts with RBPJ/RBPSUH.

The protein localises to the cytoplasm. It localises to the nucleus. It is found in the cytoskeleton. Its subcellular location is the microtubule organizing center. The protein resides in the centrosome. Functionally, tubulin-binding protein that acts as a negative regulator of Notch signaling pathway. Shuttles between the cytoplasm and the nucleus and mediates the nuclear export of RBPJ/RBPSUH, thereby preventing the interaction between RBPJ/RBPSUH and NICD product of Notch proteins (Notch intracellular domain), leading to down-regulate Notch-mediated transcription. May play a role in neurogenesis. The polypeptide is RBPJ-interacting and tubulin-associated protein 1 (RITA1) (Ailuropoda melanoleuca (Giant panda)).